Here is a 417-residue protein sequence, read N- to C-terminus: D-amino acid dehydrogenase (417 aa).

FAD is bound at residue 3 to 17 (IVVLGGGVVGVTSAW).

This sequence belongs to the DadA oxidoreductase family. It depends on FAD as a cofactor.

It carries out the reaction a D-alpha-amino acid + A + H2O = a 2-oxocarboxylate + AH2 + NH4(+). It functions in the pathway amino-acid degradation; D-alanine degradation; NH(3) and pyruvate from D-alanine: step 1/1. In terms of biological role, oxidative deamination of D-amino acids. The sequence is that of D-amino acid dehydrogenase from Aeromonas salmonicida (strain A449).